Reading from the N-terminus, the 509-residue chain is Lysine--tRNA ligase (509 aa).

The Mg(2+) site is built by Glu-395 and Glu-402.

The protein belongs to the class-II aminoacyl-tRNA synthetase family. In terms of assembly, homodimer. Mg(2+) is required as a cofactor.

Its subcellular location is the cytoplasm. The catalysed reaction is tRNA(Lys) + L-lysine + ATP = L-lysyl-tRNA(Lys) + AMP + diphosphate. The chain is Lysine--tRNA ligase from Fervidobacterium nodosum (strain ATCC 35602 / DSM 5306 / Rt17-B1).